Here is a 596-residue protein sequence, read N- to C-terminus: Dihydroxy-acid dehydratase pbrD, mitochondrial (596 aa).

A mitochondrion-targeting transit peptide spans 1–18; sequence MATSSIRSRALGLSRRAR. C84 is a binding site for [2Fe-2S] cluster. D116 serves as a coordination point for Mg(2+). Residue C157 participates in [2Fe-2S] cluster binding. D158 is a binding site for Mg(2+). C230 lines the [2Fe-2S] cluster pocket. E483 is a binding site for Mg(2+). S509 (proton acceptor) is an active-site residue.

This sequence belongs to the IlvD/Edd family. [2Fe-2S] cluster is required as a cofactor. Requires Mg(2+) as cofactor.

Its subcellular location is the mitochondrion. The catalysed reaction is (2R)-2,3-dihydroxy-3-methylbutanoate = 3-methyl-2-oxobutanoate + H2O. It catalyses the reaction (2R,3R)-2,3-dihydroxy-3-methylpentanoate = (S)-3-methyl-2-oxopentanoate + H2O. It participates in amino-acid biosynthesis; L-isoleucine biosynthesis; L-isoleucine from 2-oxobutanoate: step 3/4. Its pathway is amino-acid biosynthesis; L-valine biosynthesis; L-valine from pyruvate: step 3/4. Its activity is regulated as follows. DHAD activity is not inhibited by the dihydroxyacid dehydratase inhibitor aspterric acid (AA). In terms of biological role, dihydroxyacid dehydratase; part of the gene cluster that mediates the biosynthesis of the sesquiterpenoid aspterric acid (AA), an inhibitor of dihydroxy-acid dehydratase (DHAD) effective as an herbicide. Performs the third step in the common pathway leading to biosynthesis of branched-chain amino acids. Catalyzes the dehydration of (2R,3R)-2,3-dihydroxy-3-methylpentanoate (2,3-dihydroxy-3-methylvalerate) into 2-oxo-3-methylpentanoate (2-oxo-3-methylvalerate) and of (2R)-2,3-dihydroxy-3-methylbutanoate (2,3-dihydroxyisovalerate) into 2-oxo-3-methylbutanoate (2-oxoisovalerate), the penultimate precursor to L-isoleucine and L-valine, respectively. PbrD confers self-resistance in the presence of the dihydroxyacid dehydratase inhibitor aspterric acid (AA) produced by the ast cluster. This Penicillium brasilianum protein is Dihydroxy-acid dehydratase pbrD, mitochondrial.